The sequence spans 115 residues: Aspartate 1-decarboxylase (115 aa).

Catalysis depends on serine 25, which acts as the Schiff-base intermediate with substrate; via pyruvic acid. Serine 25 bears the Pyruvic acid (Ser) mark. Threonine 57 contributes to the substrate binding site. The active-site Proton donor is tyrosine 58. 71-73 (GAA) lines the substrate pocket.

The protein belongs to the PanD family. In terms of assembly, heterooctamer of four alpha and four beta subunits. Pyruvate serves as cofactor. In terms of processing, is synthesized initially as an inactive proenzyme, which is activated by self-cleavage at a specific serine bond to produce a beta-subunit with a hydroxyl group at its C-terminus and an alpha-subunit with a pyruvoyl group at its N-terminus.

It is found in the cytoplasm. It catalyses the reaction L-aspartate + H(+) = beta-alanine + CO2. It functions in the pathway cofactor biosynthesis; (R)-pantothenate biosynthesis; beta-alanine from L-aspartate: step 1/1. Its function is as follows. Catalyzes the pyruvoyl-dependent decarboxylation of aspartate to produce beta-alanine. This chain is Aspartate 1-decarboxylase, found in Campylobacter concisus (strain 13826).